We begin with the raw amino-acid sequence, 864 residues long: Seed linoleate 9S-lipoxygenase-2 (864 aa).

Residues 46–171 (SGINIIGSTL…LYKSPRIFFA (126 aa)) form the PLAT domain. The 691-residue stretch at 174-864 (SYLPSETPSP…FRGIPNSISI (691 aa)) folds into the Lipoxygenase domain. The tract at residues 230 to 264 (PILGGSSTHPYPRRGRTGRYPTRKDPNSEKPATET) is disordered. Basic and acidic residues predominate over residues 251–264 (TRKDPNSEKPATET). Positions 524, 529, 716, 720, and 864 each coordinate Fe cation.

It belongs to the lipoxygenase family. It depends on Fe cation as a cofactor.

The protein localises to the cytoplasm. It carries out the reaction (9Z,12Z)-octadecadienoate + O2 = (9S)-hydroperoxy-(10E,12Z)-octadecadienoate. The protein operates within lipid metabolism; oxylipin biosynthesis. Its function is as follows. Plant lipoxygenase may be involved in a number of diverse aspects of plant physiology including growth and development, pest resistance, and senescence or responses to wounding. It catalyzes the hydroperoxidation of lipids containing a cis,cis-1,4-pentadiene structure. The chain is Seed linoleate 9S-lipoxygenase-2 (LOX1.2) from Pisum sativum (Garden pea).